Here is a 152-residue protein sequence, read N- to C-terminus: Large ribosomal subunit protein uL13 (152 aa).

The protein belongs to the universal ribosomal protein uL13 family. Part of the 50S ribosomal subunit.

This protein is one of the early assembly proteins of the 50S ribosomal subunit, although it is not seen to bind rRNA by itself. It is important during the early stages of 50S assembly. The polypeptide is Large ribosomal subunit protein uL13 (Borreliella afzelii (strain PKo) (Borrelia afzelii)).